Consider the following 21-residue polypeptide: Testis ecdysiotropin peptide 1 (21 aa).

Residues 1–21 form a disordered region; sequence ISDFDEYEPLNDADNNEVLDF.

In terms of biological role, start or boost ecdysteroid synthesis in testis of larvae and pupae. This Lymantria dispar (Gypsy moth) protein is Testis ecdysiotropin peptide 1.